A 283-amino-acid polypeptide reads, in one-letter code: Pantothenate synthetase (283 aa).

30 to 37 contacts ATP; it reads MGALHEGH. The active-site Proton donor is H37. A (R)-pantoate-binding site is contributed by Q61. Beta-alanine is bound at residue Q61. 147–150 provides a ligand contact to ATP; that stretch reads GEKD. Q153 lines the (R)-pantoate pocket. Residues I176 and 184–187 contribute to the ATP site; that span reads VSSR.

This sequence belongs to the pantothenate synthetase family. Homodimer.

Its subcellular location is the cytoplasm. It catalyses the reaction (R)-pantoate + beta-alanine + ATP = (R)-pantothenate + AMP + diphosphate + H(+). It participates in cofactor biosynthesis; (R)-pantothenate biosynthesis; (R)-pantothenate from (R)-pantoate and beta-alanine: step 1/1. Its function is as follows. Catalyzes the condensation of pantoate with beta-alanine in an ATP-dependent reaction via a pantoyl-adenylate intermediate. The chain is Pantothenate synthetase from Pelodictyon phaeoclathratiforme (strain DSM 5477 / BU-1).